A 167-amino-acid polypeptide reads, in one-letter code: Ureidoglycolate lyase (167 aa).

It belongs to the ureidoglycolate lyase family. In terms of assembly, homodimer. Requires Ni(2+) as cofactor.

The enzyme catalyses (S)-ureidoglycolate = urea + glyoxylate. It participates in nitrogen metabolism; (S)-allantoin degradation. Its function is as follows. Catalyzes the catabolism of the allantoin degradation intermediate (S)-ureidoglycolate, generating urea and glyoxylate. Involved in the utilization of allantoin as nitrogen source. This Pseudomonas entomophila (strain L48) protein is Ureidoglycolate lyase.